A 393-amino-acid chain; its full sequence is Envelope glycoprotein D (393 aa).

Positions 1–25 (MGRLTSGVGTAALLVVAVGLRVVCA) are cleaved as a signal peptide. The tract at residues 25-57 (AKYALADPSLKMADPNRFRGKNLPVLDRLTDPP) is interaction with TNFRSF14. Over 26–339 (KYALADPSLK…HHAPAAPSNP (314 aa)) the chain is Virion surface. Zn(2+) is bound at residue histidine 64. Disulfide bonds link cysteine 91/cysteine 214, cysteine 131/cysteine 227, and cysteine 143/cysteine 152. 2 N-linked (GlcNAc...) asparagine; by host glycosylation sites follow: asparagine 119 and asparagine 146. Aspartate 240 is a Zn(2+) binding site. Residues 261-305 (LKIAGWHGPKPPYTSTLLPPELSDTTNATQPELVPEDPEDSALLE) are profusion. Over residues 274-290 (TSTLLPPELSDTTNATQ) the composition is skewed to polar residues. The interval 274–301 (TSTLLPPELSDTTNATQPELVPEDPEDS) is disordered. Asparagine 287 carries an N-linked (GlcNAc...) asparagine; by host glycan. Residues 340–363 (GLIIGALAGSTLAVLVIGGIAFWV) form a helical membrane-spanning segment. Residues 364-393 (RRRAQMAPKRLRLPHIRDDDAPPSHQPLFY) are Intravirion-facing.

It belongs to the herpesviridae glycoprotein D family. As to quaternary structure, homodimer. Interacts with host receptor TNFRSF14. Interacts with host receptor NECTIN1. Interacts with host receptor NECTIN2. Interacts (via profusion domain) with gB; this interaction occurs in the absence of gH/gL. Interacts (via profusion domain) with gH/gL heterodimer; this interaction occurs in the absence of gB. Associates with the gB-gH/gL-gD complex. Interacts (via C-terminus) with UL11 tegument protein.

The protein resides in the virion membrane. Its function is as follows. Envelope glycoprotein that binds to the host cell entry receptors NECTIN1, NECTIN2 and TNFRSF14/HVEM, promoting the virus entry into host cells. May trigger fusion with host membrane, by recruiting the fusion machinery composed of gB and gH/gL. The chain is Envelope glycoprotein D (gD) from Homo sapiens (Human).